The sequence spans 639 residues: MATVRLPDGKELEVGSGERLEDVARRIGPRLARDAVVARLNGRLVDLDLPVDGGGELEFVTADSPEGLYVLRHSTAHAMAQAILELYPGSKLTIGPPVDDGFYYDIEVNGRISEEDLPRIEEKMREIARRDLPVRREEVSKEEARRLYRDNPYKLELIDEIPDERVSIYRQGDFFDLCRGPHVPSTGRLGAFKLQSVAGAYWRGDENNPMLTRIYGTAWPTEKQLRAYLKRLEEARARDHRRLGRELGLFTFAPEDVGPGIPLFLPKGETLRHLMEGFVREVQTRHGYQHVWTGHLVNERLYARSGHLEHYRDAMFPPMRDGEVSYRLKPMNCPSHMTLFNSRPRSYRELPVRYAEFATLYRYEKSGELSGLTRVRSLTQDDAHVFCTEEQVQEEFARALAIIREVLDAYGFTDYRVRLSLRDPEGGKYIADEEKWGRAEGALRAALDAAGIDYEPAPGEAAFYGPKADFMARDVLGREWQLSTIQVDFIQPGRLGCEYVGEDGERHTPVLLHRAVTGTTERFMAVLIEHYAGAFPVWLSPVQAVVIPVADRHLEYARRVREELSEGGLRVEVDDSPNSMQKKIRENARQKTPYLLIVGDREEEAGTVNVRRRGEGKRQTEMGLRGFLERVRGEVAARR.

Residues 1 to 61 (MATVRLPDGK…DGGGELEFVT (61 aa)) form the TGS domain. The catalytic stretch occupies residues 239 to 536 (DHRRLGRELG…LIEHYAGAFP (298 aa)). Cys-333, His-384, and His-513 together coordinate Zn(2+).

Belongs to the class-II aminoacyl-tRNA synthetase family. In terms of assembly, homodimer. Requires Zn(2+) as cofactor.

It is found in the cytoplasm. The enzyme catalyses tRNA(Thr) + L-threonine + ATP = L-threonyl-tRNA(Thr) + AMP + diphosphate + H(+). In terms of biological role, catalyzes the attachment of threonine to tRNA(Thr) in a two-step reaction: L-threonine is first activated by ATP to form Thr-AMP and then transferred to the acceptor end of tRNA(Thr). Also edits incorrectly charged L-seryl-tRNA(Thr). This is Threonine--tRNA ligase from Rubrobacter xylanophilus (strain DSM 9941 / JCM 11954 / NBRC 16129 / PRD-1).